The following is a 261-amino-acid chain: Cytochrome c oxidase subunit 3 (261 aa).

At 1 to 15 the chain is on the mitochondrial matrix side; it reads MTHQTHAYHMVNPSP. A helical membrane pass occupies residues 16–34; it reads WPLTGALSALLMTSGLIMW. Residues 35–40 are Mitochondrial intermembrane-facing; that stretch reads FHFNST. The chain crosses the membrane as a helical span at residues 41-66; sequence ILLMLGLTTNMLTMYQWWRDVIREST. At 67-72 the chain is on the mitochondrial matrix side; that stretch reads FQGHHT. The chain crosses the membrane as a helical span at residues 73–105; the sequence is PNVQKGLRYGMILFIISEVLFFTGFFWAFYHSS. Residues 106-128 are Mitochondrial intermembrane-facing; that stretch reads LAPTPELGGCWPPTGIHPLNPLE. A helical transmembrane segment spans residues 129 to 152; the sequence is VPLLNTSVLLASGVSITWAHHSLM. At 153–155 the chain is on the mitochondrial matrix side; it reads EGN. A helical membrane pass occupies residues 156–183; that stretch reads RNHMLQALFITIALGVYFTLLQASEYYE. The Mitochondrial intermembrane portion of the chain corresponds to 184 to 190; the sequence is APFTISD. Residues 191–223 traverse the membrane as a helical segment; that stretch reads GVYGSTFFVATGFHGLHVIIGSTFLIVCFFRQL. The Mitochondrial matrix segment spans residues 224–232; it reads KFHFTSNHH. The chain crosses the membrane as a helical span at residues 233–256; the sequence is FGFEAAAWYWHFVDVVWLFLYVSI. At 257–261 the chain is on the mitochondrial intermembrane side; that stretch reads YWWGS.

Belongs to the cytochrome c oxidase subunit 3 family. In terms of assembly, component of the cytochrome c oxidase (complex IV, CIV), a multisubunit enzyme composed of 14 subunits. The complex is composed of a catalytic core of 3 subunits MT-CO1, MT-CO2 and MT-CO3, encoded in the mitochondrial DNA, and 11 supernumerary subunits COX4I, COX5A, COX5B, COX6A, COX6B, COX6C, COX7A, COX7B, COX7C, COX8 and NDUFA4, which are encoded in the nuclear genome. The complex exists as a monomer or a dimer and forms supercomplexes (SCs) in the inner mitochondrial membrane with NADH-ubiquinone oxidoreductase (complex I, CI) and ubiquinol-cytochrome c oxidoreductase (cytochrome b-c1 complex, complex III, CIII), resulting in different assemblies (supercomplex SCI(1)III(2)IV(1) and megacomplex MCI(2)III(2)IV(2)).

The protein resides in the mitochondrion inner membrane. It catalyses the reaction 4 Fe(II)-[cytochrome c] + O2 + 8 H(+)(in) = 4 Fe(III)-[cytochrome c] + 2 H2O + 4 H(+)(out). In terms of biological role, component of the cytochrome c oxidase, the last enzyme in the mitochondrial electron transport chain which drives oxidative phosphorylation. The respiratory chain contains 3 multisubunit complexes succinate dehydrogenase (complex II, CII), ubiquinol-cytochrome c oxidoreductase (cytochrome b-c1 complex, complex III, CIII) and cytochrome c oxidase (complex IV, CIV), that cooperate to transfer electrons derived from NADH and succinate to molecular oxygen, creating an electrochemical gradient over the inner membrane that drives transmembrane transport and the ATP synthase. Cytochrome c oxidase is the component of the respiratory chain that catalyzes the reduction of oxygen to water. Electrons originating from reduced cytochrome c in the intermembrane space (IMS) are transferred via the dinuclear copper A center (CU(A)) of subunit 2 and heme A of subunit 1 to the active site in subunit 1, a binuclear center (BNC) formed by heme A3 and copper B (CU(B)). The BNC reduces molecular oxygen to 2 water molecules using 4 electrons from cytochrome c in the IMS and 4 protons from the mitochondrial matrix. The polypeptide is Cytochrome c oxidase subunit 3 (MT-CO3) (Eudorcas thomsonii (Thomson's gazelle)).